The sequence spans 353 residues: UPF0283 membrane protein KPK_3110 (353 aa).

The next 3 membrane-spanning stretches (helical) occupy residues 70-90, 99-119, and 213-233; these read MVSA…VQWT, WIAL…VGSV, and ESTL…FIAW.

It belongs to the UPF0283 family.

Its subcellular location is the cell inner membrane. This Klebsiella pneumoniae (strain 342) protein is UPF0283 membrane protein KPK_3110.